Reading from the N-terminus, the 563-residue chain is Arginine--tRNA ligase (563 aa).

The 'HIGH' region motif lies at 120-130 (PNIAKPFHIGH).

Belongs to the class-I aminoacyl-tRNA synthetase family. As to quaternary structure, monomer.

It is found in the cytoplasm. It carries out the reaction tRNA(Arg) + L-arginine + ATP = L-arginyl-tRNA(Arg) + AMP + diphosphate. The chain is Arginine--tRNA ligase from Clostridium botulinum (strain Loch Maree / Type A3).